A 229-amino-acid chain; its full sequence is Large ribosomal subunit protein uL1c (229 aa).

This sequence belongs to the universal ribosomal protein uL1 family. In terms of assembly, part of the 50S ribosomal subunit.

The protein localises to the plastid. Its subcellular location is the chloroplast. Functionally, binds directly to 23S rRNA. Might be involved in E site tRNA release (Potential). The polypeptide is Large ribosomal subunit protein uL1c (rpl1) (Porphyra purpurea (Red seaweed)).